Reading from the N-terminus, the 594-residue chain is UvrABC system protein C (594 aa).

The GIY-YIG domain occupies Asp-14–Ile-91. The 36-residue stretch at Lys-196–Ile-231 folds into the UVR domain.

Belongs to the UvrC family. As to quaternary structure, interacts with UvrB in an incision complex.

Its subcellular location is the cytoplasm. Its function is as follows. The UvrABC repair system catalyzes the recognition and processing of DNA lesions. UvrC both incises the 5' and 3' sides of the lesion. The N-terminal half is responsible for the 3' incision and the C-terminal half is responsible for the 5' incision. The sequence is that of UvrABC system protein C from Bacillus mycoides (strain KBAB4) (Bacillus weihenstephanensis).